Reading from the N-terminus, the 312-residue chain is Molybdenum cofactor biosynthesis bifunctional protein (312 aa).

A molybdenum cofactor biosynthesis protein C region spans residues 1–155; the sequence is MEFTHLDENG…GGKSSAAEYH (155 aa). Residues 74-76 and 110-111 contribute to the substrate site; these read LCH and ME. Aspartate 125 is a catalytic residue. The molybdenum cofactor biosynthesis protein B stretch occupies residues 156-312; it reads PRTAILVMSD…FPMLKGDGHA (157 aa).

It in the N-terminal section; belongs to the MoaC family. The protein in the C-terminal section; belongs to the MoaB/Mog family.

The catalysed reaction is (8S)-3',8-cyclo-7,8-dihydroguanosine 5'-triphosphate = cyclic pyranopterin phosphate + diphosphate. It participates in cofactor biosynthesis; molybdopterin biosynthesis. Its function is as follows. Catalyzes the conversion of (8S)-3',8-cyclo-7,8-dihydroguanosine 5'-triphosphate to cyclic pyranopterin monophosphate (cPMP). The sequence is that of Molybdenum cofactor biosynthesis bifunctional protein (moaCB) from Chlorobaculum tepidum (strain ATCC 49652 / DSM 12025 / NBRC 103806 / TLS) (Chlorobium tepidum).